A 236-amino-acid polypeptide reads, in one-letter code: 28 kDa antigen (236 aa).

The signal sequence occupies residues 1-22; sequence MPNRRRCKLSTAISTVATLAIA. The disordered stretch occupies residues 76-105; that stretch reads PVPSLTGTDDPGNGLRTPGLTSPDLTNQEL. Residues 94-105 show a composition bias toward polar residues; the sequence is GLTSPDLTNQEL.

The protein to M.tuberculosis ERP.

The protein is 28 kDa antigen of Mycobacterium leprae (strain TN).